Consider the following 2367-residue polypeptide: Toxin B (2367 aa).

The tract at residues 2–91 (SLVNRKQLEK…EILELKNSNL (90 aa)) is four-helical bundle. The GT44 domain occupies 96–469 (KNLHFIWIGG…YPEANTTITL (374 aa)). Residues 96 to 469 (KNLHFIWIGG…YPEANTTITL (374 aa)) are glucosyltransferase region. UDP-alpha-D-glucose is bound by residues 101 to 103 (IWI), asparagine 139, 269 to 273 (SDILR), and 286 to 288 (DVD). Residues aspartate 286, aspartate 288, and glutamate 516 each contribute to the Mg(2+) site. UDP-alpha-D-glucose is bound at residue 519 to 521 (SLW). Positions 545 to 800 (GEDDNLDFSQ…KSKNLPELST (256 aa)) are autoprocessing region. Positions 546 and 547 each coordinate Zn(2+). Residues 568–775 (SSSTKSSERG…EESIIKDISS (208 aa)) form the Peptidase C80 domain. 1D-myo-inositol hexakisphosphate-binding residues include tyrosine 578, lysine 601, and lysine 648. Histidine 654 is a Zn(2+) binding site. Histidine 654 acts as the For protease activity in catalysis. The active-site Nucleophile; for protease activity is the cysteine 699. Histidine 758 contacts Zn(2+). 3 residues coordinate 1D-myo-inositol hexakisphosphate: lysine 765, lysine 776, and lysine 793. The segment at 801-1501 (LLQEIRNNSN…VVLIIKVYMD (701 aa)) is translocation region. Interaction with host frizzled receptors FZD1, FZD2 and FZD7 regions lie at residues 1434 to 1439 (LKTLMA), 1487 to 1512 (SELSDVVLIIKVYMDNSKPPFGYYSN), and 1598 to 1600 (SLK). Cell wall-binding repeat units lie at residues 1833 to 1852 (VSGLVYINDSLYYFKPPIKN), 1854 to 1873 (ITGFTTIGDDKYYFNPDNGG), 1876 to 1895 (SVGETIIDGKNYYFSQNGVL), 1926 to 1945 (FTGKLIIDENVYYFGDNYRA), 1946 to 1965 (AIEWQTLDDEVYYFSTDTGR), 1967 to 1986 (FKGLNQIGDDKFYFNSDGIM), 1987 to 2006 (QKGFVNINDKTFYFDDSGVM), 2007 to 2026 (KSGYTEIDGRYFYFAENGEM), 2057 to 2076 (YSGILNFNNKIYYFDDSFTA), 2077 to 2097 (VVGWKDLEDGSKYYFDENTAE), 2099 to 2118 (SIGISIINDGKYYFNDSGIM), 2119 to 2138 (QIGFVTINNEVFYFSDSGIV), 2139 to 2158 (ESGMQNIDDNYFYISENGLV), 2209 to 2231 (ETGWIYDSENESDKYYFDPEAKK), 2233 to 2252 (YKGINVIDDIKYYFDENGIM), 2253 to 2272 (RTGLITFEDNHYYFNEDGEM), 2273 to 2292 (QYGYLNIEDKMFYFSEDGIM), 2323 to 2342 (YTGWLDLDEKRYYFTDEYIA), and 2343 to 2362 (ATGSVIIDGEEYYFDPDTAQ). Residues 1835–2367 (GLVYINDSLY…PDTAQLVISE (533 aa)) are receptor-binding (CROPS) region.

The protein belongs to the clostridial glucosylating toxin (LCGT) family. Interacts with host FZD1. Interacts with host FZD2; interaction promotes toxin entry into host cell and occupies the binding site for Wnt-adducted palmitoleate in FZD2, leading to prevent Wnt-binding and downstream Wnt signaling. Interacts with host FZD7. Interacts with host CSPG4. Interacts with host NECTIN3/PVRL3. Requires Zn(2+) as cofactor. It depends on Mn(2+) as a cofactor. Mg(2+) serves as cofactor. In terms of processing, undergoes autocatalytic cleavage to release the N-terminal part (Glucosyltransferase TcdB), which constitutes the active part of the toxin, in the host cytosol. 1D-myo-inositol hexakisphosphate-binding (InsP6) activates the peptidase C80 domain and promotes autoprocessing.

Its subcellular location is the secreted. The protein localises to the host endosome membrane. The protein resides in the host cytoplasm. It localises to the host cytosol. It is found in the host cell membrane. The enzyme catalyses L-threonyl-[protein] + UDP-alpha-D-glucose = 3-O-(alpha-D-glucosyl)-L-threonyl-[protein] + UDP + H(+). With respect to regulation, protease activity is activated upon binding to 1D-myo-inositol hexakisphosphate (InsP6), which induces conformational reorganization. Precursor of a cytotoxin that targets and disrupts the colonic epithelium, inducing the host inflammatory and innate immune responses and resulting in diarrhea and pseudomembranous colitis. TcdB constitutes the main toxin that mediates the pathology of C.difficile infection, an opportunistic pathogen that colonizes the colon when the normal gut microbiome is disrupted. Compared to TcdA, TcdB is more virulent and more important for inducing the host inflammatory and innate immune responses. This form constitutes the precursor of the toxin: it enters into host cells and mediates autoprocessing to release the active toxin (Glucosyltransferase TcdB) into the host cytosol. Targets colonic epithelia by binding to the frizzled receptors FZD1, FZD2 and FZD7, and enters host cells via clathrin-mediated endocytosis. Frizzled receptors constitute the major host receptors in the colonic epithelium, but other receptors, such as CSPG4 or NECTIN3/PVRL3, have been identified. Binding to carbohydrates and sulfated glycosaminoglycans on host cell surface also contribute to entry into cells. Once entered into host cells, acidification in the endosome promotes the membrane insertion of the translocation region and formation of a pore, leading to translocation of the GT44 and peptidase C80 domains across the endosomal membrane. This activates the peptidase C80 domain and autocatalytic processing, releasing the N-terminal part (Glucosyltransferase TcdB), which constitutes the active part of the toxin, in the cytosol. In terms of biological role, active form of the toxin, which is released into the host cytosol following autoprocessing and inactivates small GTPases. Acts by mediating monoglucosylation of small GTPases of the Rho family (Rac1, RhoA, RhoB, RhoC, RhoG and Cdc42) in host cells at the conserved threonine residue located in the switch I region ('Thr-37/35'), using UDP-alpha-D-glucose as the sugar donor. Monoglucosylation of host small GTPases completely prevents the recognition of the downstream effector, blocking the GTPases in their inactive form, leading to actin cytoskeleton disruption and cell death, resulting in the loss of colonic epithelial barrier function. This is Toxin B from Clostridioides difficile (Peptoclostridium difficile).